Consider the following 617-residue polypeptide: MNTENRSPEQFDIPLFLKNLPKLPGVYRFFDEGGNVLYVGKAVNLKRRVSGYFQKNDHSPRIALMVKQVRHIETTITRSEAEALILENNFIKALSPKYNILFRDDKSYPYLMLSGHQYPQMAYYRGTLKNPNQYFGPYPNSNAVRDSIQVLQKVFMLRTCEDSVFEHRDRPCLLYQIKRCTAPCVGHISEEDYCDSVRQAATFLNGKTDELTRTLQHKMQTAAANLQFEEAARYRDQIQALGIIQSNQFIDSKNPNNPNDIDLLALAVSDGLVCVHWVSIRGGRHVGDKSFFPDTKNDPEPNGQDYAEAFVAQHYLGKSKPDIIISNFPVPDALKEALEGEHGKQMQFVTKTIGERKVWLKMAEQNAQMAITQRHLQQSNQQHRIDELAKILGMNSDGINRLECFDISHTQGEATIASCVVYDEQNIQPSQYRRYNITTAKPGDDYAAMREVLTRRYGKIQEAEANGESVKWPDVVLIDGGKGQIGVAVSVWEELGLHIPLVGIAKGPERKAGMEELILPFTGELFRLPPNSPALHLLQTVRDESHRFAITGHRKKRDKARVTSSLGDIPGVGSKRRQALLTRFGGLRGVIAASREDLEKVEGISKALAETIYNHLH.

The 79-residue stretch at 22 to 100 (KLPGVYRFFD…IKALSPKYNI (79 aa)) folds into the GIY-YIG domain. The 36-residue stretch at 209–244 (DELTRTLQHKMQTAAANLQFEEAARYRDQIQALGII) folds into the UVR domain.

This sequence belongs to the UvrC family. Interacts with UvrB in an incision complex.

It localises to the cytoplasm. The UvrABC repair system catalyzes the recognition and processing of DNA lesions. UvrC both incises the 5' and 3' sides of the lesion. The N-terminal half is responsible for the 3' incision and the C-terminal half is responsible for the 5' incision. The polypeptide is UvrABC system protein C (Neisseria gonorrhoeae (strain ATCC 700825 / FA 1090)).